Here is a 455-residue protein sequence, read N- to C-terminus: Ammonium transporter Rh type B (455 aa).

Over 1–10 (MARVPRHRRL) the chain is Cytoplasmic. The chain crosses the membrane as a helical span at residues 11 to 31 (VLPLLCLLFQGATALLFAIFV). At 32–58 (RYNHETDAALWHWGNHSNVDNEFYFRY) the chain is on the extracellular side. A glycan (N-linked (GlcNAc...) asparagine) is linked at Asn-46. Residues 59-79 (PSFQDVHVMVFVGFGFLMVFL) traverse the membrane as a helical segment. Residues 80-83 (QRYG) lie on the Cytoplasmic side of the membrane. A helical membrane pass occupies residues 84–104 (FSSVGFTFLVASLTLQWATLL). Over 105 to 121 (QGFLHSFHGGHIHVGVE) the chain is Extracellular. A helical transmembrane segment spans residues 122 to 142 (SLINADFCAGAVLISFGAVLG). At 143–146 (KTGP) the chain is on the cytoplasmic side. A helical transmembrane segment spans residues 147–167 (AQLLLMALLEAVLFSVNEFIL). The Extracellular portion of the chain corresponds to 168-175 (LSLLGVRD). Residues 176 to 198 (AGGSMTIHTFGAYFGLFLSWVLY) traverse the membrane as a helical segment. Topologically, residues 199-216 (RSQLEKSRHRQSSVYNSD) are cytoplasmic. The helical transmembrane segment at 217–237 (LFAMIGTIFLWVFWPSFNSAP) threads the bilayer. The Extracellular segment spans residues 238 to 248 (TALGDGQHRTV). Residues 249-269 (VNTYYSLTASTLSTFALSALV) form a helical membrane-spanning segment. At 270 to 279 (SGDGRLDMVH) the chain is on the cytoplasmic side. A helical transmembrane segment spans residues 280-300 (VQNAALAGGVVVGTSSEMMLT). Position 301 (Pro-301) is a topological domain, extracellular. The chain crosses the membrane as a helical span at residues 302 to 322 (FGALAAGFLAGTVSTLGYKFF). Residues 323–343 (TPILESRFKLQDTCGVHNLHG) lie on the Cytoplasmic side of the membrane. The helical transmembrane segment at 344–364 (MPGVLGAILGVVVAALATHEA) threads the bilayer. Topologically, residues 365-390 (YGDGLQSVFPLIAKGQRSATSQAVYQ) are extracellular. The helical transmembrane segment at 391-411 (LFGMFVTLVFASVGGSLGGLL) threads the bilayer. Residues 412–455 (LRLPFLDSPPDSQCFEDQVYWEVPGEQETETQRPLRGGESDTRA) are Cytoplasmic-facing. The interaction with ANK3 stretch occupies residues 413–421 (RLPFLDSPP). Positions 434–455 (VPGEQETETQRPLRGGESDTRA) are disordered. Over residues 441–455 (ETQRPLRGGESDTRA) the composition is skewed to basic and acidic residues.

It belongs to the ammonium transporter (TC 2.A.49) family. Rh subfamily. Interacts (via C-terminus) with ANK2 and ANK3; required for targeting to the basolateral membrane. Post-translationally, N-glycosylated. In terms of tissue distribution, expressed in kidney by connecting segments and collecting tubules. Also expressed in liver by perivenous hepatocytes. Expressed in the forestomach and the fundus of the stomach. Expressed in duodenum, jejunum, ileum and colon at the level of villous (at protein level). Specifically expressed in kidney where it is restricted to the epithelial linings of the convoluted tubules and the loop of Henle. Also detected in ovary. Expressed by hepatocytes and dermal hair follicles and papillae.

It is found in the cell membrane. Its subcellular location is the basolateral cell membrane. It carries out the reaction NH4(+)(in) = NH4(+)(out). The enzyme catalyses methylamine(out) = methylamine(in). It catalyses the reaction CO2(out) = CO2(in). With respect to regulation, inhibited by amiloride. Functionally, ammonium transporter involved in the maintenance of acid-base homeostasis. Transports ammonium and its related derivative methylammonium across the basolateral plasma membrane of epithelial cells likely contributing to renal transepithelial ammonia transport and ammonia metabolism. May transport either NH4(+) or NH3 ammonia species predominantly mediating an electrogenic NH4(+) transport. May act as a CO2 channel providing for renal acid secretion. In Mus musculus (Mouse), this protein is Ammonium transporter Rh type B (Rhbg).